The primary structure comprises 1048 residues: Integrin alpha-V (1048 aa).

The N-terminal stretch at 1 to 30 (MAFPPRRRLRLGPRGLPLLLSGLLLPLCRA) is a signal peptide. The Extracellular portion of the chain corresponds to 31 to 992 (FNLDVESPAE…WGIQPAPMPV (962 aa)). 7 FG-GAP repeats span residues 32–98 (NLDV…RRCQ), 109–170 (DYAK…VEYA), 173–225 (RSKN…VSKY), 237–291 (QLAT…GKNM), 292–357 (SSLH…GDFQ), 358–415 (TIKL…GLNA), and 419–482 (QILE…VYPS). Asn-74 is a glycosylation site (N-linked (GlcNAc...) asparagine). 3 disulfide bridges follow: Cys-89-Cys-97, Cys-138-Cys-158, and Cys-172-Cys-185. The Ca(2+) site is built by Asp-260, Asn-262, Asp-264, Ile-266, and Asp-268. Residues Asn-290 and Asn-296 are each glycosylated (N-linked (GlcNAc...) asparagine). Ca(2+) is bound by residues Asp-314, Asn-316, Asp-318, Tyr-320, Asp-322, Asp-379, Asp-381, Asp-383, Phe-385, Asp-387, Asp-443, Asp-445, Asn-447, Tyr-449, and Asp-451. An N-linked (GlcNAc...) asparagine glycan is attached at Asn-488. Disulfide bonds link Cys-491–Cys-502 and Cys-508–Cys-565. 2 N-linked (GlcNAc...) asparagine glycosylation sites follow: Asn-554 and Asn-615. Intrachain disulfides connect Cys-626–Cys-632 and Cys-698–Cys-711. N-linked (GlcNAc...) asparagine glycans are attached at residues Asn-704, Asn-835, Asn-851, and Asn-874. Intrachain disulfides connect Cys-852/Cys-914 and Cys-904/Cys-909. N-linked (GlcNAc...) asparagine glycosylation is found at Asn-945, Asn-973, and Asn-980. The helical transmembrane segment at 993–1016 (PVWVIILAVLAGLLLLAVLVFVMY) threads the bilayer. At 1017–1048 (RMGFFKRVRPPQEEQEREQLQPHENGEGNSET) the chain is on the cytoplasmic side. A GFFKR motif motif is present at residues 1019-1023 (GFFKR). Residues 1027–1042 (PQEEQEREQLQPHENG) are compositionally biased toward basic and acidic residues. The segment at 1027 to 1048 (PQEEQEREQLQPHENGEGNSET) is disordered.

This sequence belongs to the integrin alpha chain family. As to quaternary structure, heterodimer of an alpha and a beta subunit. The alpha subunit is composed of a heavy and a light chain linked by a disulfide bond. Alpha-V (ITGAV) associates with either beta-1 (ITGB1), beta-3 (ITGB3), beta-5 (ITGB5), beta-6 (ITGB6) or beta-8 (ITGB8). Interacts with RAB25. Interacts with CIB1. Integrins ITGAV:ITGB3 and ITGAV:ITGB5 interact with FBLN5 (via N-terminus). ITGAV:ITGB3 and ITGAV:ITGB5 interact with CCN3. ITGAV:ITGB3 interacts with ADGRA2. ITGAV:ITGB3 interacts with FGF2; it is likely that FGF2 can simultaneously bind ITGAV:ITGB3 and FGF receptors. ITGAV:ITGB3 interacts with SELP (via C-type lectin domain); the interaction mediates cell-cell interaction and adhesion. ITGAV:ITGB3 is found in a ternary complex with CX3CR1 and CX3CL1. ITGAV:ITGB3 is found in a ternary complex with NRG1 and ERBB3. ITGAV:ITGB3 is found in a ternary complex with FGF1 and FGFR1. ITGAV:ITGB3 is found in a ternary complex with IGF1 and IGF1R. ITGAV:ITGB3 interacts with IGF2. ITGAV:ITGB3 and ITGAV:ITGB6 interact with FBN1. ITGAV:ITGB3 interacts with CD9, CD81 and CD151 (via second extracellular domain). ITGAV:ITGB6 interacts with TGFB1. ITGAV:ITGB3 interacts with PTN. Forms a complex with PTPRZ1 and PTN that stimulates endothelial cell migration through ITGB3 'Tyr-773' phosphorylation. Interacts with TM4SF19. (Microbial infection) Alpha-V/beta-6 and alpha-V/beta-3 bind to foot-and-mouth disease virus (FMDV) VP1 protein and acts as a receptor for this virus.

It localises to the cell membrane. Its subcellular location is the cell junction. The protein resides in the focal adhesion. In terms of biological role, the alpha-V (ITGAV) integrins are receptors for vitronectin, cytotactin, fibronectin, fibrinogen, laminin, matrix metalloproteinase-2, osteopontin, osteomodulin, prothrombin, thrombospondin, TGFB1 and vWF. They recognize the sequence R-G-D in a wide array of ligands. Alpha-V integrins may play a role in embryo implantation, angiogenesis and wound healing. ITGAV:ITGB3 binds to fractalkine (CX3CL1) and may act as its coreceptor in CX3CR1-dependent fractalkine signaling. ITGAV:ITGB3 binds to NRG1 (via EGF domain) and this binding is essential for NRG1-ERBB signaling. ITGAV:ITGB3 binds to FGF1 and this binding is essential for FGF1 signaling. ITGAV:ITGB3 binds to FGF2 and this binding is essential for FGF2 signaling. ITGAV:ITGB3 binds to IGF1 and this binding is essential for IGF1 signaling. ITGAV:ITGB3 binds to IGF2 and this binding is essential for IGF2 signaling. ITGAV:ITGB3 binds to IL1B and this binding is essential for IL1B signaling. ITGAV:ITGB3 binds to PLA2G2A via a site (site 2) which is distinct from the classical ligand-binding site (site 1) and this induces integrin conformational changes and enhanced ligand binding to site 1. ITGAV:ITGB3 and ITGAV:ITGB6 act as receptors for fibrillin-1 (FBN1) and mediate R-G-D-dependent cell adhesion to FBN1. Integrin alpha-V/beta-6 or alpha-V/beta-8 (ITGAV:ITGB6 or ITGAV:ITGB8) mediates R-G-D-dependent release of transforming growth factor beta-1 (TGF-beta-1) from regulatory Latency-associated peptide (LAP), thereby playing a key role in TGF-beta-1 activation. ITGAV:ITGB3 acts as a receptor for CD40LG. ITGAV:ITGB3 acts as a receptor for IBSP and promotes cell adhesion and migration to IBSP. This Bos taurus (Bovine) protein is Integrin alpha-V (ITGAV).